Here is a 263-residue protein sequence, read N- to C-terminus: Pro-opiomelanocortin (263 aa).

The first 25 residues, Met1 to Ser25, serve as a signal peptide directing secretion. Pyrrolidone carboxylic acid is present on Gln26. Intrachain disulfides connect Cys27/Cys49 and Cys33/Cys45. The segment at Ser114–Ser142 is disordered. Residues Leu130–Ser142 show a composition bias toward basic and acidic residues. Valine amide is present on Val152.

It belongs to the POMC family. In terms of processing, specific enzymatic cleavages at paired basic residues yield the different active peptides.

It localises to the secreted. In terms of biological role, stimulates the adrenal glands to release cortisol. Anorexigenic peptide. Increases the pigmentation of skin by increasing melanin production in melanocytes. Its function is as follows. Increases the pigmentation of skin by increasing melanin production in melanocytes. Functionally, endogenous orexigenic opiate. In terms of biological role, endogenous opiate. In Acipenser transmontanus (White sturgeon), this protein is Pro-opiomelanocortin (pomc).